The chain runs to 298 residues: ATP synthase gamma chain (298 aa).

The protein belongs to the ATPase gamma chain family. As to quaternary structure, F-type ATPases have 2 components, CF(1) - the catalytic core - and CF(0) - the membrane proton channel. CF(1) has five subunits: alpha(3), beta(3), gamma(1), delta(1), epsilon(1). CF(0) has three main subunits: a, b and c.

Its subcellular location is the cell inner membrane. Functionally, produces ATP from ADP in the presence of a proton gradient across the membrane. The gamma chain is believed to be important in regulating ATPase activity and the flow of protons through the CF(0) complex. The chain is ATP synthase gamma chain from Desulfosudis oleivorans (strain DSM 6200 / JCM 39069 / Hxd3) (Desulfococcus oleovorans).